The sequence spans 160 residues: Ribosomal RNA large subunit methyltransferase H (160 aa).

S-adenosyl-L-methionine-binding positions include L76, G108, and 127–132 (LGKMTW).

Belongs to the RNA methyltransferase RlmH family. In terms of assembly, homodimer.

Its subcellular location is the cytoplasm. It carries out the reaction pseudouridine(1915) in 23S rRNA + S-adenosyl-L-methionine = N(3)-methylpseudouridine(1915) in 23S rRNA + S-adenosyl-L-homocysteine + H(+). Specifically methylates the pseudouridine at position 1915 (m3Psi1915) in 23S rRNA. In Sinorhizobium fredii (strain NBRC 101917 / NGR234), this protein is Ribosomal RNA large subunit methyltransferase H.